The sequence spans 447 residues: Zinc finger protein ZIC 1 (447 aa).

A C2H2-type 1; atypical zinc finger spans residues 225 to 260 (LICKWIEPEQLANPKKSCNKTFSTMHELVTHVTVEH). The C2H2-type 2; atypical zinc-finger motif lies at 269–296 (HICFWEECPREGKPFKAKYKLVNHIRVH). C2H2-type zinc fingers lie at residues 302–326 (FPCPFPGCGKVFARSENLKIHKRTH), 332–356 (FKCEFEGCDRRFANSSDRKKHMHVH), and 362–384 (YLCKMCDKSYTHPSSLRKHMKVH). The segment at 375–431 (SSLRKHMKVHESSSQGSQPSPAASSGYESSTPPTIVSPSTDNPTTSSLSPSSSAVHH) is disordered. Residues 386–427 (SSSQGSQPSPAASSGYESSTPPTIVSPSTDNPTTSSLSPSSS) are compositionally biased toward low complexity.

The protein belongs to the GLI C2H2-type zinc-finger protein family. As to quaternary structure, interacts (via the C2H2-type domains 3, 4 and 5) with MDFIC (via the C2H2-type domains 3, 4 and 5). Interacts with GLI1; the interaction enhances transcription activation. Interacts with GLI2. Interacts with GLI3; the interaction enhances transcription activation. In terms of tissue distribution, CNS. A high level expression is seen in the cerebellum. Detected in the nuclei of the cerebellar granule cell lineage from the progenitor cells of the external germinal layer to the postmigrated cells of the internal granular layer. Detected in medulloblastoma (26/29 cases), but not present in all other tumors examined.

It is found in the nucleus. The protein resides in the cytoplasm. Functionally, acts as a transcriptional activator. Involved in neurogenesis. Plays important roles in the early stage of organogenesis of the CNS, as well as during dorsal spinal cord development and maturation of the cerebellum. Involved in the spatial distribution of mossy fiber (MF) neurons within the pontine gray nucleus (PGN). Plays a role in the regulation of MF axon pathway choice. Promotes MF migration towards ipsilaterally-located cerebellar territories. May have a role in shear flow mechanotransduction in osteocytes. Retains nuclear GLI1 and GLI3 in the cytoplasm. Binds to the minimal GLI-consensus sequence 5'-TGGGTGGTC-3'. In Homo sapiens (Human), this protein is Zinc finger protein ZIC 1 (ZIC1).